The following is a 184-amino-acid chain: Ribosome-recycling factor (184 aa).

It belongs to the RRF family.

Its subcellular location is the cytoplasm. Responsible for the release of ribosomes from messenger RNA at the termination of protein biosynthesis. May increase the efficiency of translation by recycling ribosomes from one round of translation to another. The chain is Ribosome-recycling factor from Fervidobacterium nodosum (strain ATCC 35602 / DSM 5306 / Rt17-B1).